An 882-amino-acid polypeptide reads, in one-letter code: Protein translocase subunit SecA (882 aa).

ATP contacts are provided by residues glutamine 79, 97–101, and aspartate 487; that span reads GEGKT.

It belongs to the SecA family.

The protein resides in the plastid. Its subcellular location is the chloroplast stroma. The protein localises to the chloroplast thylakoid membrane. It carries out the reaction ATP + H2O + cellular proteinSide 1 = ADP + phosphate + cellular proteinSide 2.. Functionally, has a central role in coupling the hydrolysis of ATP to the transfer of proteins across the thylakoid membrane. The protein is Protein translocase subunit SecA of Gracilaria tenuistipitata var. liui (Red alga).